Consider the following 324-residue polypeptide: Myoblast determination protein 1 homolog (324 aa).

The disordered stretch occupies residues 125–146; the sequence is VDSQHEDTTTSTAGGAGVGGPR. The 52-residue stretch at 155 to 206 folds into the bHLH domain; sequence DRRKAATMRERRRLRKVNEAFEVVKQRTCPNPNQRLPKVEILRSAIDYINNL. The interval 251–272 is disordered; that stretch reads YNPENMFDDDDLTDSDDDRDHH. A compositionally biased stretch (acidic residues) spans 256–267; it reads MFDDDDLTDSDD.

As to quaternary structure, efficient DNA binding requires dimerization with another bHLH protein. Body wall muscle cells; in clonal muscle precursors, in a set of early embryonic blastomeres (the ms-granddaughters), and in six glial-like cells called GLRS.

It localises to the nucleus. Involved in myogenesis, in cooperation with transcription factors unc-120 and hnd-1. Acts redundantly with fozi-1 to promote body wall muscle cell and coelomocyte specification in postembryonic mesoderm progenitors, probably through suppression of sem-2. This is Myoblast determination protein 1 homolog from Caenorhabditis elegans.